The primary structure comprises 214 residues: Probable maleylacetoacetate isomerase (214 aa).

The GST N-terminal domain maps to 4-84; sequence QKPVLYSYWR…YLEETHPDVP (81 aa). Glutathione is bound by residues 14 to 19, V56, 68 to 69, Q108, and 112 to 114; these read SSCSWR, ES, and NLK. The region spanning 89 to 212 is the GST C-terminal domain; the sequence is DPIKRAHARA…HPDNQPDTGL (124 aa).

The protein belongs to the GST superfamily. Zeta family. Requires glutathione as cofactor.

The protein localises to the cytoplasm. It carries out the reaction 4-maleylacetoacetate = 4-fumarylacetoacetate. It functions in the pathway amino-acid degradation; L-phenylalanine degradation; acetoacetate and fumarate from L-phenylalanine: step 5/6. The protein is Probable maleylacetoacetate isomerase (gst-42) of Caenorhabditis elegans.